The sequence spans 348 residues: NADH-quinone oxidoreductase subunit H (348 aa).

Transmembrane regions (helical) follow at residues 7–27 (IWLL…VVLL), 82–102 (GVFL…WAVI), 115–135 (VGLL…IMGG), 161–181 (IGFV…TTIV), 199–219 (FLDW…ISAL), 251–271 (LFFL…TILF), 287–307 (VPGI…FAMV), and 322–342 (LGWK…ATFL).

This sequence belongs to the complex I subunit 1 family. As to quaternary structure, NDH-1 is composed of 14 different subunits. Subunits NuoA, H, J, K, L, M, N constitute the membrane sector of the complex.

The protein resides in the cell inner membrane. It catalyses the reaction a quinone + NADH + 5 H(+)(in) = a quinol + NAD(+) + 4 H(+)(out). In terms of biological role, NDH-1 shuttles electrons from NADH, via FMN and iron-sulfur (Fe-S) centers, to quinones in the respiratory chain. The immediate electron acceptor for the enzyme in this species is believed to be ubiquinone. Couples the redox reaction to proton translocation (for every two electrons transferred, four hydrogen ions are translocated across the cytoplasmic membrane), and thus conserves the redox energy in a proton gradient. This subunit may bind ubiquinone. The chain is NADH-quinone oxidoreductase subunit H from Bartonella quintana (strain Toulouse) (Rochalimaea quintana).